A 125-amino-acid polypeptide reads, in one-letter code: Small ribosomal subunit protein bS6 (125 aa).

The disordered stretch occupies residues 99 to 125 (ASPMVKAKDERRASAEVENNDFEDAEE). Positions 104-113 (KAKDERRASA) are enriched in basic and acidic residues. Acidic residues predominate over residues 116–125 (ENNDFEDAEE).

The protein belongs to the bacterial ribosomal protein bS6 family.

Functionally, binds together with bS18 to 16S ribosomal RNA. The polypeptide is Small ribosomal subunit protein bS6 (Mannheimia succiniciproducens (strain KCTC 0769BP / MBEL55E)).